We begin with the raw amino-acid sequence, 427 residues long: 3-phosphoshikimate 1-carboxyvinyltransferase (427 aa).

3-phosphoshikimate is bound by residues K22, S23, and R27. K22 contacts phosphoenolpyruvate. 2 residues coordinate phosphoenolpyruvate: G96 and R124. 7 residues coordinate 3-phosphoshikimate: S169, S170, Q171, S197, D313, N336, and K340. Phosphoenolpyruvate is bound at residue Q171. The Proton acceptor role is filled by D313. Residues R344, R386, and K411 each coordinate phosphoenolpyruvate.

Belongs to the EPSP synthase family. Monomer.

It localises to the cytoplasm. It catalyses the reaction 3-phosphoshikimate + phosphoenolpyruvate = 5-O-(1-carboxyvinyl)-3-phosphoshikimate + phosphate. It functions in the pathway metabolic intermediate biosynthesis; chorismate biosynthesis; chorismate from D-erythrose 4-phosphate and phosphoenolpyruvate: step 6/7. Functionally, catalyzes the transfer of the enolpyruvyl moiety of phosphoenolpyruvate (PEP) to the 5-hydroxyl of shikimate-3-phosphate (S3P) to produce enolpyruvyl shikimate-3-phosphate and inorganic phosphate. In Escherichia coli O8 (strain IAI1), this protein is 3-phosphoshikimate 1-carboxyvinyltransferase.